The sequence spans 38 residues: Large ribosomal subunit protein bL36 (38 aa).

It belongs to the bacterial ribosomal protein bL36 family.

This chain is Large ribosomal subunit protein bL36, found in Enterococcus faecalis (strain ATCC 700802 / V583).